Consider the following 229-residue polypeptide: Glucose-induced degradation protein 8-B homolog (229 aa).

The region spanning 26 to 58 is the LisH domain; that stretch reads QRADMNRLIMNYLVTEGFKEAAEKFRMESGIEP. In terms of domain architecture, CTLH spans 64 to 121; the sequence is SLDERIKIREMVLKGQIQEAIALINSLHPELLDTNRYLYFHLQQQHLIELIRLRETEA.

As to quaternary structure, identified in the CTLH complex that contains at least MAEA, RMND5A (or alternatively its paralog RMND5B), GID8, WDR26, and RANBP9 and/or RANBP10. Interacts with CTNNB1.

It is found in the cytoplasm. The protein resides in the nucleus. Core component of the CTLH E3 ubiquitin-protein ligase complex that selectively accepts ubiquitin from UBE2H and mediates ubiquitination and subsequent proteasomal degradation of target proteins. Acts as a positive regulator of Wnt signaling pathway by promoting beta-catenin (CTNNB1) nuclear accumulation. Required for normal Wnt signaling and normal dorsoventral patterning during embryogenesis. This Danio rerio (Zebrafish) protein is Glucose-induced degradation protein 8-B homolog (gid8b).